Consider the following 155-residue polypeptide: Small ribosomal subunit protein mS86 (155 aa).

The transit peptide at 1–27 (MHYMGLFSRAGNIFRQPRALQASNAML) directs the protein to the mitochondrion. The RRM domain maps to 36-114 (SKIFVGGLSP…RIIGVHPADS (79 aa)).

The protein belongs to the GR-RBP family. In terms of assembly, component of the mitochondrial ribosome small subunit.

It localises to the mitochondrion. Possibly has a role in RNA transcription or processing during stress. This is Small ribosomal subunit protein mS86 (RBG6) from Arabidopsis thaliana (Mouse-ear cress).